Here is a 177-residue protein sequence, read N- to C-terminus: MSNITYVKGNILKPKSYARILIHSCNCNGSWGGGIAYQLALRYPKAEKDYVEVCEKYGSNLLGKCILLPSYENSDLLICCLFTSSFGGSSHGEKQSILNYTKLALDKLKTFREAKDKTRTSEDSIGDYLNGHIKYPIGEYKLEMPQINSGIFGVPWKETERVLEEFSGDMSFTVYQL.

Residues 1–177 (MSNITYVKGN…GDMSFTVYQL (177 aa)) enclose the Macro domain. Substrate contacts are provided by residues 9–11 (GNI), 24–26 (SCN), 31–36 (WGGGIA), and 147–153 (INSGIFG).

This sequence belongs to the POA1 family.

The enzyme catalyses ADP-alpha-D-ribose 1''-phosphate + H2O = ADP-D-ribose + phosphate. In terms of biological role, highly specific phosphatase involved in the metabolism of ADP-ribose 1''-phosphate (Appr1p) which is produced as a consequence of tRNA splicing. Removes ADP-ribose from glutamate residues in proteins bearing a single ADP-ribose moiety. Inactive towards proteins bearing poly-ADP-ribose. This chain is ADP-ribose 1''-phosphate phosphatase (POA1), found in Saccharomyces cerevisiae (strain YJM789) (Baker's yeast).